A 269-amino-acid chain; its full sequence is Nuclear egress protein 2 (269 aa).

Topologically, residues 1 to 247 (MSRRTYVRSE…VWKLALPVAN (247 aa)) are perinuclear space. A helical transmembrane segment spans residues 248 to 268 (VTYALFIVIVLVVVLGAVLFW). A topological domain (nuclear) is located at residue K269.

The protein belongs to the herpesviridae NEC2 protein family. In terms of assembly, forms a heterohexameric complex with NEC1. Phosphorylated.

It localises to the host nucleus inner membrane. Its function is as follows. Plays an essential role in virion nuclear egress, the first step of virion release from infected cell. Within the host nucleus, NEC1 interacts with the newly formed capsid through the vertexes and directs it to the inner nuclear membrane by associating with NEC2. Induces the budding of the capsid at the inner nuclear membrane as well as its envelopment into the perinuclear space. There, the NEC1/NEC2 complex promotes the fusion of the enveloped capsid with the outer nuclear membrane and the subsequent release of the viral capsid into the cytoplasm where it will reach the secondary budding sites in the host Golgi or trans-Golgi network. This Homo sapiens (Human) protein is Nuclear egress protein 2.